A 141-amino-acid chain; its full sequence is D-aminoacyl-tRNA deacylase (141 aa).

The Gly-cisPro motif, important for rejection of L-amino acids motif lies at 133–134 (GP).

The protein belongs to the DTD family. As to quaternary structure, homodimer.

Its subcellular location is the cytoplasm. It carries out the reaction glycyl-tRNA(Ala) + H2O = tRNA(Ala) + glycine + H(+). It catalyses the reaction a D-aminoacyl-tRNA + H2O = a tRNA + a D-alpha-amino acid + H(+). An aminoacyl-tRNA editing enzyme that deacylates mischarged D-aminoacyl-tRNAs. Also deacylates mischarged glycyl-tRNA(Ala), protecting cells against glycine mischarging by AlaRS. Acts via tRNA-based rather than protein-based catalysis; rejects L-amino acids rather than detecting D-amino acids in the active site. By recycling D-aminoacyl-tRNA to D-amino acids and free tRNA molecules, this enzyme counteracts the toxicity associated with the formation of D-aminoacyl-tRNA entities in vivo and helps enforce protein L-homochirality. This chain is D-aminoacyl-tRNA deacylase, found in Thermobifida fusca (strain YX).